Reading from the N-terminus, the 65-residue chain is Metallothionein-3 (65 aa).

The residue at position 1 (Met1) is an N-acetylmethionine. The interval 1–30 (MDPEACPCPTGGSCTCSDSCKCEGCTCASS) is beta. A divalent metal cation contacts are provided by Cys6, Cys8, Cys14, Cys16, Cys20, Cys22, Cys25, and Cys27. An alpha region spans residues 31–65 (KKSCCPAECEKCAKDCVCKGGEGAEAEEKKCGCCQ). Ser33 carries the post-translational modification Phosphoserine. Residues Cys34, Cys35, Cys39, Cys42, Cys46, Cys48, Cys61, Cys63, and Cys64 each coordinate a divalent metal cation.

The protein belongs to the metallothionein superfamily. Type 1 family.

Functionally, binds heavy metals. Contains five zinc and one copper atoms per polypeptide chain and only a negligible amount of cadmium. The chain is Metallothionein-3 (MT3) from Ovis aries (Sheep).